A 629-amino-acid chain; its full sequence is Serine/threonine-protein kinase ICK (629 aa).

Residues 4–284 (YTTIKQLGDG…ASQALRYPYF (281 aa)) form the Protein kinase domain. ATP-binding positions include 10 to 18 (LGDGTYGSV) and Lys-33. Asp-125 functions as the Proton acceptor in the catalytic mechanism. Residue Thr-157 is modified to Phosphothreonine. Tyr-159 bears the Phosphotyrosine mark. Ser-161 carries the post-translational modification Phosphoserine. 3 disordered regions span residues 292 to 322 (ISTQ…PAQA), 454 to 482 (PSEP…QSTA), and 579 to 629 (GYSS…PSRR). Residues 309–321 (GPPPYVKPAPPAQ) show a composition bias toward pro residues. Positions 460-482 (TGTSVSTQASSQRRDTPTLQSTA) are enriched in polar residues.

The protein belongs to the protein kinase superfamily. CMGC Ser/Thr protein kinase family. CDC2/CDKX subfamily. It depends on Mg(2+) as a cofactor. Autophosphorylated on serine and threonine residues. Phosphorylation at Thr-157 increases kinase activity. In terms of tissue distribution, expressed in embryonic heart from day 11. Highly expressed in the uterus and at lower levels in brain, heart, lung, kidney, skeletal muscle, ovary and liver in adult tissues.

Its subcellular location is the cytoplasm. The protein localises to the cell projection. It is found in the cilium. It localises to the nucleus. The protein resides in the cytoskeleton. Its subcellular location is the cilium basal body. The enzyme catalyses L-seryl-[protein] + ATP = O-phospho-L-seryl-[protein] + ADP + H(+). It carries out the reaction L-threonyl-[protein] + ATP = O-phospho-L-threonyl-[protein] + ADP + H(+). Required for ciliogenesis, particularly in neuronal and retinal progenitor cells. Phosphorylates KIF3A. Involved in the control of ciliary length. Regulates the ciliary localization of SHH pathway components as well as the localization of IFT components at ciliary tips. May play a role in cardiac development. Regulates intraflagellar transport (IFT) speed and negatively regulates cilium length in a cAMP and mTORC1 signaling-dependent manner and this regulation requires its kinase activity. The sequence is that of Serine/threonine-protein kinase ICK (Cilk1) from Rattus norvegicus (Rat).